The primary structure comprises 54 residues: Photosystem II reaction center protein K (54 aa).

Residues 1–17 (MSFENFAIITLKENVFA) constitute a propeptide that is removed on maturation. The chain crosses the membrane as a helical span at residues 33 to 53 (LPIIPVLFLLLAFVWQSAVKF).

It belongs to the PsbK family. In terms of assembly, PSII is composed of 1 copy each of membrane proteins PsbA, PsbB, PsbC, PsbD, PsbE, PsbF, PsbH, PsbI, PsbJ, PsbK, PsbL, PsbM, PsbT, PsbY, PsbZ, Psb30/Ycf12, at least 3 peripheral proteins of the oxygen-evolving complex and a large number of cofactors. It forms dimeric complexes.

Its subcellular location is the plastid. The protein localises to the chloroplast thylakoid membrane. Its function is as follows. One of the components of the core complex of photosystem II (PSII). PSII is a light-driven water:plastoquinone oxidoreductase that uses light energy to abstract electrons from H(2)O, generating O(2) and a proton gradient subsequently used for ATP formation. It consists of a core antenna complex that captures photons, and an electron transfer chain that converts photonic excitation into a charge separation. The polypeptide is Photosystem II reaction center protein K (Euglena deses).